The chain runs to 182 residues: Adenine phosphoribosyltransferase (182 aa).

133–137 is an AMP binding site; sequence ATGGS.

This sequence belongs to the purine/pyrimidine phosphoribosyltransferase family. As to quaternary structure, homodimer. Mg(2+) serves as cofactor.

It localises to the cytoplasm. Its subcellular location is the nucleus. The catalysed reaction is AMP + diphosphate = 5-phospho-alpha-D-ribose 1-diphosphate + adenine. Its pathway is purine metabolism; AMP biosynthesis via salvage pathway; AMP from adenine: step 1/1. Functionally, catalyzes a salvage reaction resulting in the formation of AMP, that is energically less costly than de novo synthesis. The sequence is that of Adenine phosphoribosyltransferase (APT1) from Yarrowia lipolytica (strain CLIB 122 / E 150) (Yeast).